Reading from the N-terminus, the 323-residue chain is Acetyl-coenzyme A carboxylase carboxyl transferase subunit alpha (323 aa).

Positions 39–293 (RLAGKSQQLT…KRSLAESLRQ (255 aa)) constitute a CoA carboxyltransferase C-terminal domain.

It belongs to the AccA family. As to quaternary structure, acetyl-CoA carboxylase is a heterohexamer composed of biotin carboxyl carrier protein (AccB), biotin carboxylase (AccC) and two subunits each of ACCase subunit alpha (AccA) and ACCase subunit beta (AccD).

The protein resides in the cytoplasm. It catalyses the reaction N(6)-carboxybiotinyl-L-lysyl-[protein] + acetyl-CoA = N(6)-biotinyl-L-lysyl-[protein] + malonyl-CoA. Its pathway is lipid metabolism; malonyl-CoA biosynthesis; malonyl-CoA from acetyl-CoA: step 1/1. Its function is as follows. Component of the acetyl coenzyme A carboxylase (ACC) complex. First, biotin carboxylase catalyzes the carboxylation of biotin on its carrier protein (BCCP) and then the CO(2) group is transferred by the carboxyltransferase to acetyl-CoA to form malonyl-CoA. The chain is Acetyl-coenzyme A carboxylase carboxyl transferase subunit alpha from Cupriavidus necator (strain ATCC 17699 / DSM 428 / KCTC 22496 / NCIMB 10442 / H16 / Stanier 337) (Ralstonia eutropha).